A 29-amino-acid chain; its full sequence is Cliotide T18 (29 aa).

The cyclopeptide (Gly-Asn) cross-link spans Gly1–Asn29. 3 disulfides stabilise this stretch: Cys5–Cys19, Cys9–Cys21, and Cys14–Cys26.

Contains 3 disulfide bonds. Post-translationally, this is a cyclic peptide. As to expression, expressed in root nodules but not in seed.

Its function is as follows. Probably participates in a plant defense mechanism. This Clitoria ternatea (Butterfly pea) protein is Cliotide T18.